Consider the following 105-residue polypeptide: uncharacterized protein (105 aa).

This is an uncharacterized protein from Haemophilus influenzae (strain ATCC 51907 / DSM 11121 / KW20 / Rd).